A 463-amino-acid polypeptide reads, in one-letter code: Competence protein ComFA (463 aa).

4 residues coordinate Zn(2+): Cys-60, Cys-63, Cys-84, and Cys-87. One can recognise a Helicase ATP-binding domain in the interval 133-285 (IEAISKKEEL…LNGQLHSVRI (153 aa)). Position 146–153 (146–153 (AVCGAGKT)) interacts with ATP. Positions 233–236 (DEVD) match the DEAD box motif. One can recognise a Helicase C-terminal domain in the interval 317-463 (AVKRWIEFHV…ELAAKVECTD (147 aa)).

This sequence belongs to the DEAD box helicase family. In terms of assembly, monomer and dimer in solution. Interacts with DprA and ComFC; ComFA-ComFC form rings about 150 Angstroms in diameter with apparent 6-fold symmetry. Zn(2+) is required as a cofactor.

It is found in the cytoplasm. Involved in transformation (genetic competence for DNA uptake). Required for DNA uptake but not for DNA binding to cells. DNA uptake is energy dependent, this protein may provide the driving force for DNA uptake. Does not have helicase activity, translocates on single-stranded (ss)DNA in a 5'-3' direction in an ATP-dependent manner, but does not unwind double-stranded (ds)DNA. ATP hydrolysis causes the release of ssDNA from ComFA. A ssDNA-stimulated ATPase; dsDNA does not stimulate ATPase. ATP hydrolysis causes the release of ssDNA from ComFA. Binds ssDNA but only very poorly to dsDNA in the absence of ATP. Binding to ssDNA does not require free DNA ends. This is Competence protein ComFA from Bacillus subtilis (strain 168).